Here is a 466-residue protein sequence, read N- to C-terminus: Asparagine--tRNA ligase (466 aa).

It belongs to the class-II aminoacyl-tRNA synthetase family. Homodimer.

The protein localises to the cytoplasm. The enzyme catalyses tRNA(Asn) + L-asparagine + ATP = L-asparaginyl-tRNA(Asn) + AMP + diphosphate + H(+). The polypeptide is Asparagine--tRNA ligase (Klebsiella pneumoniae subsp. pneumoniae (strain ATCC 700721 / MGH 78578)).